The primary structure comprises 378 residues: POU domain, class 3, transcription factor 2 (378 aa).

3 disordered regions span residues 1–28, 86–118, and 151–205; these read MATTASNHYNILTSSPSIVHSEPGSMQQ, SPRDEMHNSSNLQHQSRPPHLVHQTHGNHHDSR, and LIPG…TPTS. A compositionally biased stretch (basic and acidic residues) spans 164 to 181; that stretch reads MRDAHEDHHSPHLSDHGH. Residues 200–274 enclose the POU-specific domain; the sequence is EDTPTSDDLE…LLNKWLEEAD (75 aa). Serine 279 carries the phosphoserine modification. A DNA-binding region (homeobox) is located at residues 292–351; sequence KRKKRTSIEVSVKGALESHFLKCPKPAASEITSLADSLQLEKEVVRVWFCNRRQKEKRMT. A disordered region spans residues 347–378; sequence EKRMTPPGGPLPGTEDVYGDTPPHHGVQTPVQ.

The protein belongs to the POU transcription factor family. Class-3 subfamily. In terms of tissue distribution, predominantly expressed in the central nervous system, with strong expression in the cerebellum.

It localises to the nucleus. Its function is as follows. Transcription factor that may play important roles in patterning the embryonic brain. The polypeptide is POU domain, class 3, transcription factor 2 (pou3f2) (Danio rerio (Zebrafish)).